The sequence spans 376 residues: Glutamate 5-kinase (376 aa).

K15 provides a ligand contact to ATP. Substrate contacts are provided by S55, D142, and N154. Residues 174-175 (TD) and 216-222 (TGGMATK) each bind ATP. Residues 281 to 359 (AGKVLVDAGA…AEIEQLLGYR (79 aa)) enclose the PUA domain.

This sequence belongs to the glutamate 5-kinase family.

It localises to the cytoplasm. It carries out the reaction L-glutamate + ATP = L-glutamyl 5-phosphate + ADP. It functions in the pathway amino-acid biosynthesis; L-proline biosynthesis; L-glutamate 5-semialdehyde from L-glutamate: step 1/2. Catalyzes the transfer of a phosphate group to glutamate to form L-glutamate 5-phosphate. In Trichlorobacter lovleyi (strain ATCC BAA-1151 / DSM 17278 / SZ) (Geobacter lovleyi), this protein is Glutamate 5-kinase.